The sequence spans 59 residues: Putative potassium channel toxin Ts23 (59 aa).

An N-terminal signal peptide occupies residues 1 to 22; that stretch reads MKAFYGILIIFILISMLDLSQQ. 3 disulfide bridges follow: C29–C50, C35–C55, and C39–C57.

The protein belongs to the short scorpion toxin superfamily. Potassium channel inhibitor family. Alpha-KTx 04 subfamily. Expressed by the venom gland.

The protein localises to the secreted. Potently blocks Kv1.1/KCNA1 (85%), Kv1.2/KCNA2 (91%), Kv1.3/KCNA3 (89%), Kv1.6/KCNA6 (94%), and Shaker (97%). The chain is Putative potassium channel toxin Ts23 from Tityus serrulatus (Brazilian scorpion).